The primary structure comprises 489 residues: Betaine aldehyde dehydrogenase (489 aa).

2 residues coordinate K(+): Thr26 and Asp93. Residue 150 to 152 (GAW) participates in NAD(+) binding. The active-site Charge relay system is the Lys162. 176-179 (KPSE) is a binding site for NAD(+). Val180 contributes to the K(+) binding site. 229 to 232 (GVET) provides a ligand contact to NAD(+). K(+) is bound at residue Leu245. Catalysis depends on Glu251, which acts as the Proton acceptor. Residues Gly253, Cys285, and Glu386 each contribute to the NAD(+) site. Cys285 acts as the Nucleophile in catalysis. Residue Cys285 is modified to Cysteine sulfenic acid (-SOH). Positions 456 and 459 each coordinate K(+). Residue Glu463 is the Charge relay system of the active site.

It belongs to the aldehyde dehydrogenase family. As to quaternary structure, dimer of dimers. K(+) is required as a cofactor.

The catalysed reaction is betaine aldehyde + NAD(+) + H2O = glycine betaine + NADH + 2 H(+). The protein operates within amine and polyamine biosynthesis; betaine biosynthesis via choline pathway; betaine from betaine aldehyde: step 1/1. Its function is as follows. Involved in the biosynthesis of the osmoprotectant glycine betaine. Catalyzes the irreversible oxidation of betaine aldehyde to the corresponding acid. This is Betaine aldehyde dehydrogenase from Burkholderia pseudomallei (strain K96243).